A 132-amino-acid chain; its full sequence is S-adenosylmethionine decarboxylase proenzyme (132 aa).

The active-site Schiff-base intermediate with substrate; via pyruvic acid is serine 65. Serine 65 is subject to Pyruvic acid (Ser); by autocatalysis. The active-site Proton acceptor; for processing activity is histidine 70. Residue cysteine 85 is the Proton donor; for catalytic activity of the active site.

It belongs to the prokaryotic AdoMetDC family. Type 1 subfamily. Heterotetramer of two alpha and two beta chains arranged as a dimer of alpha/beta heterodimers. Requires pyruvate as cofactor. Is synthesized initially as an inactive proenzyme. Formation of the active enzyme involves a self-maturation process in which the active site pyruvoyl group is generated from an internal serine residue via an autocatalytic post-translational modification. Two non-identical subunits are generated from the proenzyme in this reaction, and the pyruvate is formed at the N-terminus of the alpha chain, which is derived from the carboxyl end of the proenzyme. The post-translation cleavage follows an unusual pathway, termed non-hydrolytic serinolysis, in which the side chain hydroxyl group of the serine supplies its oxygen atom to form the C-terminus of the beta chain, while the remainder of the serine residue undergoes an oxidative deamination to produce ammonia and the pyruvoyl group blocking the N-terminus of the alpha chain.

It carries out the reaction S-adenosyl-L-methionine + H(+) = S-adenosyl 3-(methylsulfanyl)propylamine + CO2. It functions in the pathway amine and polyamine biosynthesis; S-adenosylmethioninamine biosynthesis; S-adenosylmethioninamine from S-adenosyl-L-methionine: step 1/1. Functionally, catalyzes the decarboxylation of S-adenosylmethionine to S-adenosylmethioninamine (dcAdoMet), the propylamine donor required for the synthesis of the polyamines spermine and spermidine from the diamine putrescine. The chain is S-adenosylmethionine decarboxylase proenzyme from Symbiobacterium thermophilum (strain DSM 24528 / JCM 14929 / IAM 14863 / T).